The primary structure comprises 88 residues: FXYD domain-containing ion transport regulator 4 (88 aa).

The signal sequence occupies residues 1-20 (MEEITCAFLLLLAGLPALEA). Topologically, residues 21–38 (SDPVDKDSPFYYDWESLQ) are extracellular. The helical transmembrane segment at 39 to 59 (LGGLIFGGLLCIAGIAMALSG) threads the bilayer. The Cytoplasmic segment spans residues 60–88 (KCKCRRTHKPSSLPGKATPLIIPGSANTC).

Belongs to the FXYD family. Regulatory subunit of the sodium/potassium-transporting ATPase which is composed of a catalytic alpha subunit, a non-catalytic beta subunit and a regulatory subunit. The regulatory subunit, a member of the FXYD protein family, modulates the enzymatic activity in a tissue- and isoform-specific way by changing affinities of the Na+/K+-ATPase toward Na(+), K(+) or ATP.

It is found in the cell membrane. It localises to the basolateral cell membrane. Functionally, associates with and regulates the activity of the sodium/potassium-transporting ATPase (NKA) which catalyzes the hydrolysis of ATP coupled with the exchange of Na(+) and K(+) ions across the plasma membrane. Increases the apparent affinity of the transporter for Na(+) and increases NKA activity. This chain is FXYD domain-containing ion transport regulator 4 (Fxyd4), found in Mus musculus (Mouse).